A 1521-amino-acid chain; its full sequence is Protein dispatched homolog 1 (1521 aa).

A compositionally biased stretch (polar residues) spans Met-1–Val-10. Residues Met-1–Leu-55 form a disordered region. The segment covering Leu-11–Pro-35 has biased composition (low complexity). 2 N-linked (GlcNAc...) asparagine glycosylation sites follow: Asn-14 and Asn-58. Residues Val-189–Val-209 form a helical membrane-spanning segment. Residue Asn-390 is glycosylated (N-linked (GlcNAc...) asparagine). The region spanning Gly-485–Leu-657 is the SSD domain. 3 consecutive transmembrane segments (helical) span residues Leu-499–Val-519, Met-524–Leu-544, and Val-548–Ile-568. N-linked (GlcNAc...) asparagine glycosylation occurs at Asn-581. 8 helical membrane passes run Ala-603–Val-623, Gly-637–Leu-657, Tyr-717–Asn-737, Met-986–Ile-1006, Leu-1008–Leu-1028, Val-1038–Tyr-1058, Ile-1081–Leu-1101, and Phe-1109–Cys-1129. 2 stretches are compositionally biased toward polar residues: residues Gln-1355–His-1364 and Thr-1418–Gln-1428. A disordered region spans residues Gln-1355–Leu-1440. The N-linked (GlcNAc...) asparagine glycan is linked to Asn-1455.

Belongs to the dispatched family. In terms of assembly, interacts with SHH; via the cholesterol anchor of the dually lipid-modified SHH (ShhNp).

It localises to the membrane. Functions in hedgehog (Hh) signaling. Regulates the release and extracellular accumulation of cholesterol-modified hedgehog proteins and is hence required for effective production of the Hh signal. Synergizes with SCUBE2 to cause an increase in SHH secretion. In Mus musculus (Mouse), this protein is Protein dispatched homolog 1 (Disp1).